The following is a 77-amino-acid chain: Large ribosomal subunit protein uL24 (77 aa).

It belongs to the universal ribosomal protein uL24 family. In terms of assembly, part of the 50S ribosomal subunit.

One of two assembly initiator proteins, it binds directly to the 5'-end of the 23S rRNA, where it nucleates assembly of the 50S subunit. In terms of biological role, one of the proteins that surrounds the polypeptide exit tunnel on the outside of the subunit. The sequence is that of Large ribosomal subunit protein uL24 from Campylobacter jejuni subsp. jejuni serotype O:6 (strain 81116 / NCTC 11828).